Reading from the N-terminus, the 38-residue chain is MKVQASVKPRCEYCRVIKRKGVLRVICSRQPKHKQRQG.

Belongs to the bacterial ribosomal protein bL36 family.

In Roseiflexus castenholzii (strain DSM 13941 / HLO8), this protein is Large ribosomal subunit protein bL36.